We begin with the raw amino-acid sequence, 1068 residues long: MPPRPSSGELWGIHLMPPRILVECLLPNGMIVTLECLREATLITIKHELFKEARKYPLHQLLQDESSYIFVSVTQEAEREEFFDETRRLCDLRLFQPFLKVIEPVGNREEKILNREIGFAIGMPVCEFDMVKDPEVQDFRRNILNVCKEAVDLRDLNSPHSRAMYVYPPNVESSPELPKHIYNKLDKGQIIVVIWVIVSPNNDKQKYTLKINHDCVPEQVIAEAIRKKTRSMLLSSEQLKLCVLEYQGKYILKVCGCDEYFLEKYPLSQYKYIRSCIMLGRMPNLMLMAKESLYSQLPMDCFTMPSYSRRISTATPYMNGETSTKSLWVINSALRIKILCATYVNVNIRDIDKIYVRTGIYHGGEPLCDNVNTQRVPCSNPRWNEWLNYDIYIPDLPRAARLCLSICSVKGRKGAKEEHCPLAWGNINLFDYTDTLVSGKMALNLWPVPHGLEDLLNPIGVTGSNPNKETPCLELEFDWFSSVVKFPDMSVIEEHANWSVSREAGFSYSHAGLSNRLARDNELRENDKEQLKAISTRDPLSEITEQEKDFLWSHRHYCVTIPEILPKLLLSVKWNSRDEVAQMYCLVKDWPPIKPEQAMELLDCNYPDPMVRGFAVRCLEKYLTDDKLSQYLIQLVQVLKYEQYLDNLLVRFLLKKALTNQRIGHFFFWHLKSEMHNKTVSQRFGLLLESYCRACGMYLKHLNRQVEAMEKLINLTDILKQEKKDETQKVQMKFLVEQMRRPDFMDALQGFLSPLNPAHQLGNLRLEECRIMSSAKRPLWLNWENPDIMSELLFQNNEIIFKNGDDLRQDMLTLQIIRIMENIWQNQGLDLRMLPYGCLSIGDCVGLIEVVRNSHTIMQIQCKGGLKGALQFNSHTLHQWLKDKNKGEIYDAAIDLFTRSCAGYCVATFILGIGDRHNSNIMVKDDGQLFHIDFGHFLDHKKKKFGYKRERVPFVLTQDFLIVISKGAQECTKTREFERFQEMCYKAYLAIRQHANLFINLFSMMLGSGMPELQSFDDIAYIRKTLALDKTEQEALEYFMKQMNDAHHGGWTTKMDWIFHTIKQHALN.

Residues 16–105 (MPPRILVECL…QPFLKVIEPV (90 aa)) form the PI3K-ABD domain. Residues 187 to 289 (KGQIIVVIWV…GRMPNLMLMA (103 aa)) enclose the PI3K-RBD domain. Positions 330–487 (INSALRIKIL…DWFSSVVKFP (158 aa)) constitute a C2 PI3K-type domain. Positions 517-694 (LARDNELREN…GLLLESYCRA (178 aa)) constitute a PIK helical domain. The PI3K/PI4K catalytic domain occupies 765–1051 (RLEECRIMSS…QMNDAHHGGW (287 aa)). The G-loop stretch occupies residues 771 to 777 (IMSSAKR). The interval 912–920 (GIGDRHNSN) is catalytic loop. Residues 931–957 (HIDFGHFLDHKKKKFGYKRERVPFVLT) are activation loop.

Belongs to the PI3/PI4-kinase family. In terms of assembly, heterodimer of a catalytic subunit PIK3CA and a p85 regulatory subunit (PIK3R1, PIK3R2 or PIK3R3). Interacts with IRS1 in nuclear extracts. Interacts with RUFY3. Interacts with RASD2. Interacts with APPL1. Interacts with HRAS and KRAS. Interaction with HRAS/KRAS is required for PI3K pathway signaling and cell proliferation stimulated by EGF and FGF2. Interacts with FAM83B; activates the PI3K/AKT signaling cascade.

It catalyses the reaction a 1,2-diacyl-sn-glycero-3-phospho-(1D-myo-inositol-4,5-bisphosphate) + ATP = a 1,2-diacyl-sn-glycero-3-phospho-(1D-myo-inositol-3,4,5-trisphosphate) + ADP + H(+). The catalysed reaction is a 1,2-diacyl-sn-glycero-3-phospho-(1D-myo-inositol) + ATP = a 1,2-diacyl-sn-glycero-3-phospho-(1D-myo-inositol-3-phosphate) + ADP + H(+). It carries out the reaction L-seryl-[protein] + ATP = O-phospho-L-seryl-[protein] + ADP + H(+). The enzyme catalyses 1,2-dioctanoyl-sn-glycero-3-phospho-(1D-myo-inositol-4,5-bisphosphate) + ATP = 1,2-dioctanoyl-sn-glycero-3-phospho-(1D-myo-inositol-3,4,5-trisphosphate) + ADP + H(+). It catalyses the reaction 1-octadecanoyl-2-(5Z,8Z,11Z,14Z)-eicosatetraenoyl-sn-glycero-3-phospho-1D-myo-inositol 4,5-bisphosphate + ATP = 1-octadecanoyl-2-(5Z,8Z,11Z,14Z-eicosatetraenoyl)-sn-glycero-3-phospho-(1D-myo-inositol 3,4,5-triphosphate) + ADP + H(+). Its pathway is phospholipid metabolism; phosphatidylinositol phosphate biosynthesis. Functionally, phosphoinositide-3-kinase (PI3K) phosphorylates phosphatidylinositol (PI) and its phosphorylated derivatives at position 3 of the inositol ring to produce 3-phosphoinositides. Uses ATP and PtdIns(4,5)P2 (phosphatidylinositol 4,5-bisphosphate) to generate phosphatidylinositol 3,4,5-trisphosphate (PIP3). PIP3 plays a key role by recruiting PH domain-containing proteins to the membrane, including AKT1 and PDPK1, activating signaling cascades involved in cell growth, survival, proliferation, motility and morphology. Participates in cellular signaling in response to various growth factors. Involved in the activation of AKT1 upon stimulation by receptor tyrosine kinases ligands such as EGF, insulin, IGF1, VEGFA and PDGF. Involved in signaling via insulin-receptor substrate (IRS) proteins. Essential in endothelial cell migration during vascular development through VEGFA signaling, possibly by regulating RhoA activity. Required for lymphatic vasculature development, possibly by binding to RAS and by activation by EGF and FGF2, but not by PDGF. Regulates invadopodia formation through the PDPK1-AKT1 pathway. Participates in cardiomyogenesis in embryonic stem cells through a AKT1 pathway. Participates in vasculogenesis in embryonic stem cells through PDK1 and protein kinase C pathway. In addition to its lipid kinase activity, it displays a serine-protein kinase activity that results in the autophosphorylation of the p85alpha regulatory subunit as well as phosphorylation of other proteins such as 4EBP1, H-Ras, the IL-3 beta c receptor and possibly others. Plays a role in the positive regulation of phagocytosis and pinocytosis. This Homo sapiens (Human) protein is Phosphatidylinositol 4,5-bisphosphate 3-kinase catalytic subunit alpha isoform (PIK3CA).